The following is a 1035-amino-acid chain: FACT complex subunit SPT16 (1035 aa).

A coiled-coil region spans residues 432–500; the sequence is FLKKEDEEEE…AKRRLTEQKG (69 aa). Disordered stretches follow at residues 491 to 520 and 920 to 1035; these read AKRRLTEQKGGQQTMKARKSNVSYKNASQV and EQGG…KRKK. Positions 499 to 519 are enriched in polar residues; sequence KGGQQTMKARKSNVSYKNASQ. Residues 929 to 985 show a composition bias toward acidic residues; it reads PDGEGSDAAEGDSESELDDETFNPSEDEEEEEEDSDEDYSDETEDSVDSEESADSEE. A compositionally biased stretch (basic and acidic residues) spans 986 to 1006; the sequence is ESGKDWDELEEEARKADRESL.

This sequence belongs to the peptidase M24 family. SPT16 subfamily. Component of the FACT complex (also called the DUF complex), a stable heterodimer of ssrp1 and supt16h. May also be a component of a ck2-spt16-ssrp1 complex composed of ssrp1, supt16h, csnk2a1, csnk2a2 and csnk2b. The FACT complex may also interact with vcp.

It is found in the nucleus. The protein resides in the chromosome. Functionally, component of the FACT complex, a general chromatin factor that acts to reorganize nucleosomes. The FACT complex is involved in multiple processes that require DNA as a template such as mRNA elongation, DNA replication and DNA repair. During transcription elongation the FACT complex acts as a histone chaperone that both destabilizes and restores nucleosomal structure. It facilitates the passage of RNA polymerase II and transcription by promoting the dissociation of one histone H2A-H2B dimer from the nucleosome, then subsequently promotes the reestablishment of the nucleosome following the passage of RNA polymerase II. The protein is FACT complex subunit SPT16 (supt16h) of Xenopus laevis (African clawed frog).